An 88-amino-acid chain; its full sequence is Putative membrane protein insertion efficiency factor (88 aa).

This sequence belongs to the UPF0161 family.

It is found in the cell inner membrane. Functionally, could be involved in insertion of integral membrane proteins into the membrane. This chain is Putative membrane protein insertion efficiency factor, found in Coxiella burnetii (strain Dugway 5J108-111).